A 376-amino-acid chain; its full sequence is Oligopeptide transport system permease protein OppC (376 aa).

7 consecutive transmembrane segments (helical) span residues 46–66 (WAIL…IVPL), 149–169 (FPLL…WASV), 173–193 (LWIA…YGAV), 209–229 (IIEI…GATF), 242–262 (VIFT…RIYI), 297–317 (LAVV…SLVF), and 341–361 (VALI…ARTF). The region spanning 169-366 (VAKSLWIAVV…AARTFANALN (198 aa)) is the ABC transmembrane type-1 domain.

The protein belongs to the binding-protein-dependent transport system permease family. OppBC subfamily. In terms of assembly, the complex is composed of two ATP-binding proteins (OppD and OppF), two transmembrane proteins (OppB and OppC) and a solute-binding protein (OppA).

The protein resides in the cell membrane. Its function is as follows. Part of the ABC transporter complex OppABCDF involved in the uptake of oligopeptides. Probably responsible for the translocation of the substrate across the membrane. This chain is Oligopeptide transport system permease protein OppC (oppC), found in Mycoplasma genitalium (strain ATCC 33530 / DSM 19775 / NCTC 10195 / G37) (Mycoplasmoides genitalium).